The following is a 186-amino-acid chain: Ribosome-recycling factor (186 aa).

The segment at 135 to 164 (DGMDDLKKAEKDGEIGQDESRAQSERVQKM) is disordered.

Belongs to the RRF family.

The protein localises to the cytoplasm. Functionally, responsible for the release of ribosomes from messenger RNA at the termination of protein biosynthesis. May increase the efficiency of translation by recycling ribosomes from one round of translation to another. The chain is Ribosome-recycling factor from Rhizobium meliloti (strain 1021) (Ensifer meliloti).